The primary structure comprises 874 residues: Alanine--tRNA ligase (874 aa).

Residues His-562, His-566, Cys-664, and His-668 each contribute to the Zn(2+) site.

Belongs to the class-II aminoacyl-tRNA synthetase family. Zn(2+) is required as a cofactor.

It localises to the cytoplasm. It catalyses the reaction tRNA(Ala) + L-alanine + ATP = L-alanyl-tRNA(Ala) + AMP + diphosphate. In terms of biological role, catalyzes the attachment of alanine to tRNA(Ala) in a two-step reaction: alanine is first activated by ATP to form Ala-AMP and then transferred to the acceptor end of tRNA(Ala). Also edits incorrectly charged Ser-tRNA(Ala) and Gly-tRNA(Ala) via its editing domain. In Shewanella sp. (strain ANA-3), this protein is Alanine--tRNA ligase.